The chain runs to 256 residues: 3-dehydroquinate dehydratase (256 aa).

3-dehydroquinate is bound by residues 46–48 (EWR) and Arg-82. His-144 acts as the Proton donor/acceptor in catalysis. Lys-171 serves as the catalytic Schiff-base intermediate with substrate. 3 residues coordinate 3-dehydroquinate: Arg-213, Ser-232, and Gln-236.

This sequence belongs to the type-I 3-dehydroquinase family. In terms of assembly, homodimer.

The enzyme catalyses 3-dehydroquinate = 3-dehydroshikimate + H2O. Its pathway is metabolic intermediate biosynthesis; chorismate biosynthesis; chorismate from D-erythrose 4-phosphate and phosphoenolpyruvate: step 3/7. Involved in the third step of the chorismate pathway, which leads to the biosynthesis of aromatic amino acids. Catalyzes the cis-dehydration of 3-dehydroquinate (DHQ) and introduces the first double bond of the aromatic ring to yield 3-dehydroshikimate. In Shouchella clausii (strain KSM-K16) (Alkalihalobacillus clausii), this protein is 3-dehydroquinate dehydratase.